Consider the following 79-residue polypeptide: Putative defensin-like protein 29 (79 aa).

The first 26 residues, 1–26, serve as a signal peptide directing secretion; sequence MASSGKCVFLVFLCMVALLAPSEVHA. Cystine bridges form between C45–C65, C51–C74, and C55–C76.

The protein belongs to the DEFL family.

It localises to the secreted. In Arabidopsis thaliana (Mouse-ear cress), this protein is Putative defensin-like protein 29.